A 143-amino-acid polypeptide reads, in one-letter code: Large ribosomal subunit protein uL13 (143 aa).

This sequence belongs to the universal ribosomal protein uL13 family. As to quaternary structure, part of the 50S ribosomal subunit.

Functionally, this protein is one of the early assembly proteins of the 50S ribosomal subunit, although it is not seen to bind rRNA by itself. It is important during the early stages of 50S assembly. The chain is Large ribosomal subunit protein uL13 from Natranaerobius thermophilus (strain ATCC BAA-1301 / DSM 18059 / JW/NM-WN-LF).